The primary structure comprises 266 residues: Metallo-beta-lactamase VIM-2 (266 aa).

A signal peptide spans 1-20 (MFKLLSKLLVYLTASIMAIA). Positions 114, 116, and 198 each coordinate Zn(2+).

The protein belongs to the metallo-beta-lactamase superfamily. Class-B beta-lactamase family. As to quaternary structure, monomer. Zn(2+) is required as a cofactor.

Its subcellular location is the periplasm. The catalysed reaction is a beta-lactam + H2O = a substituted beta-amino acid. Inhibited by chelating agents such as EDTA. Inhibited by a fungal natural product, aspergillomarasmine A (AMA). Inhibited by 2-triazolylthioacetamides. Functionally, class B beta-lactamase which confers resistance to the beta-lactam antibiotics, including penicillins, cephalosporins and carbapenems. Acts via hydrolysis of the beta-lactam ring. Has penicillin-, cephalosporin- and carbapenem-hydrolyzing activities. This chain is Metallo-beta-lactamase VIM-2, found in Escherichia coli.